Here is a 536-residue protein sequence, read N- to C-terminus: Glyco-Gag protein (536 aa).

Residues M1–R54 lie on the Cytoplasmic side of the membrane. A helical transmembrane segment spans residues L55–E75. The Extracellular portion of the chain corresponds to T76–E536. An N-linked (GlcNAc...) asparagine; by host glycan is attached at N137. Disordered regions lie at residues V174–P284 and E494–E536. Residues F177 to P198 show a composition bias toward pro residues. The span at P199–K209 shows a compositional bias: low complexity. Composition is skewed to pro residues over residues T210–S223 and E233–S246. The span at E494 to D511 shows a compositional bias: basic and acidic residues.

In terms of processing, glycosylated by host. Cleaved by host near the middle of the molecule, releasing the c-terminal half containing capsid and nucleoprotein domains op GAG.

Its subcellular location is the host cell membrane. Functionally, plays a role in viral particle release. Presumably acts by facilitating the fission of the virion bud at the cell surface. The polypeptide is Glyco-Gag protein (Feline sarcoma virus (strain McDonough)).